The following is a 94-amino-acid chain: Phosphoribosyl-ATP pyrophosphatase (94 aa).

It belongs to the PRA-PH family.

The protein localises to the cytoplasm. The catalysed reaction is 1-(5-phospho-beta-D-ribosyl)-ATP + H2O = 1-(5-phospho-beta-D-ribosyl)-5'-AMP + diphosphate + H(+). It participates in amino-acid biosynthesis; L-histidine biosynthesis; L-histidine from 5-phospho-alpha-D-ribose 1-diphosphate: step 2/9. This Sulfurisphaera tokodaii (strain DSM 16993 / JCM 10545 / NBRC 100140 / 7) (Sulfolobus tokodaii) protein is Phosphoribosyl-ATP pyrophosphatase (hisE).